We begin with the raw amino-acid sequence, 423 residues long: 3-phosphoshikimate 1-carboxyvinyltransferase (423 aa).

3 residues coordinate 3-phosphoshikimate: Lys28, Ser29, and Arg33. Lys28 contributes to the phosphoenolpyruvate binding site. Positions 96 and 124 each coordinate phosphoenolpyruvate. 3-phosphoshikimate-binding residues include Ser169, Ser170, Gln171, Ser198, Glu312, and His339. Gln171 lines the phosphoenolpyruvate pocket. Glu312 functions as the Proton acceptor in the catalytic mechanism. Phosphoenolpyruvate contacts are provided by Arg343, Arg384, and Lys409.

The protein belongs to the EPSP synthase family. As to quaternary structure, monomer.

It is found in the cytoplasm. The enzyme catalyses 3-phosphoshikimate + phosphoenolpyruvate = 5-O-(1-carboxyvinyl)-3-phosphoshikimate + phosphate. The protein operates within metabolic intermediate biosynthesis; chorismate biosynthesis; chorismate from D-erythrose 4-phosphate and phosphoenolpyruvate: step 6/7. Catalyzes the transfer of the enolpyruvyl moiety of phosphoenolpyruvate (PEP) to the 5-hydroxyl of shikimate-3-phosphate (S3P) to produce enolpyruvyl shikimate-3-phosphate and inorganic phosphate. The chain is 3-phosphoshikimate 1-carboxyvinyltransferase from Acidothermus cellulolyticus (strain ATCC 43068 / DSM 8971 / 11B).